The primary structure comprises 350 residues: MSPQEALTRLIEHREIFHDEMLSLMRQIMRGELSPTLISAIITGLRVKKETVGEIAAAAQVMREFAAPVQVEDDRLVDTCGTGGDSAHTFNISTTAAFVAAAAGARVAKHGGRSVSSKSGSADVLEALGVNLDQTPAQIAENIREIGLGFMFAPNFHSAMKHAASVRRELGVRTLFNILGPLTNPAGAKNQLLGVFHPDLVGIVTRVLHRLGSRHVMVVHGCTGNQGGLDEITIAGETLVGELRHGQILEYTIRPEDFGMKAARIETIQAHDTAQSAEMLRAILNNQPGPPRDIVLLNAGATIYVAGIAESLAQGVKKAHAAIESGAARKKLQELVEFSNRQNRGEVSLV.

5-phospho-alpha-D-ribose 1-diphosphate-binding positions include G81, 84–85 (GD), T89, 91–94 (NIST), 109–117 (KHGGRSVSS), and S121. G81 provides a ligand contact to anthranilate. S93 contacts Mg(2+). Residue R167 coordinates anthranilate. The Mg(2+) site is built by D230 and E231.

Belongs to the anthranilate phosphoribosyltransferase family. Homodimer. Requires Mg(2+) as cofactor.

It carries out the reaction N-(5-phospho-beta-D-ribosyl)anthranilate + diphosphate = 5-phospho-alpha-D-ribose 1-diphosphate + anthranilate. The protein operates within amino-acid biosynthesis; L-tryptophan biosynthesis; L-tryptophan from chorismate: step 2/5. Its function is as follows. Catalyzes the transfer of the phosphoribosyl group of 5-phosphorylribose-1-pyrophosphate (PRPP) to anthranilate to yield N-(5'-phosphoribosyl)-anthranilate (PRA). This Nitrosospira multiformis (strain ATCC 25196 / NCIMB 11849 / C 71) protein is Anthranilate phosphoribosyltransferase.